Reading from the N-terminus, the 271-residue chain is Imidazole glycerol phosphate synthase subunit HisF (271 aa).

Residues aspartate 12 and aspartate 136 contribute to the active site.

This sequence belongs to the HisA/HisF family. Heterodimer of HisH and HisF.

It is found in the cytoplasm. The enzyme catalyses 5-[(5-phospho-1-deoxy-D-ribulos-1-ylimino)methylamino]-1-(5-phospho-beta-D-ribosyl)imidazole-4-carboxamide + L-glutamine = D-erythro-1-(imidazol-4-yl)glycerol 3-phosphate + 5-amino-1-(5-phospho-beta-D-ribosyl)imidazole-4-carboxamide + L-glutamate + H(+). Its pathway is amino-acid biosynthesis; L-histidine biosynthesis; L-histidine from 5-phospho-alpha-D-ribose 1-diphosphate: step 5/9. Its function is as follows. IGPS catalyzes the conversion of PRFAR and glutamine to IGP, AICAR and glutamate. The HisF subunit catalyzes the cyclization activity that produces IGP and AICAR from PRFAR using the ammonia provided by the HisH subunit. This Natronomonas pharaonis (strain ATCC 35678 / DSM 2160 / CIP 103997 / JCM 8858 / NBRC 14720 / NCIMB 2260 / Gabara) (Halobacterium pharaonis) protein is Imidazole glycerol phosphate synthase subunit HisF.